Consider the following 134-residue polypeptide: uncharacterized protein (134 aa).

A signal peptide spans 1–23 (MWHLRCSNWRGSGVFGMCFSLSG). A lipid anchor (N-palmitoyl cysteine) is attached at Cys24. The S-diacylglycerol cysteine moiety is linked to residue Cys24.

It is found in the cell membrane. This is an uncharacterized protein from Treponema pallidum (strain Nichols).